Here is a 239-residue protein sequence, read N- to C-terminus: Ribosomal RNA small subunit methyltransferase G (239 aa).

S-adenosyl-L-methionine-binding positions include Gly-77, Phe-82, 128 to 129 (AE), and Arg-146. The disordered stretch occupies residues 214 to 239 (IDKKRQTPKKYPRKPGTPNKTPLLEK).

The protein belongs to the methyltransferase superfamily. RNA methyltransferase RsmG family.

The protein localises to the cytoplasm. Specifically methylates the N7 position of guanine in position 535 of 16S rRNA. This is Ribosomal RNA small subunit methyltransferase G from Staphylococcus aureus (strain Mu3 / ATCC 700698).